Here is a 507-residue protein sequence, read N- to C-terminus: Probable Xaa-Pro aminopeptidase HCAG_02413 (507 aa).

4 residues coordinate Mn(2+): aspartate 283, aspartate 294, glutamate 431, and glutamate 469.

This sequence belongs to the peptidase M24B family. Requires Mn(2+) as cofactor.

It catalyses the reaction Release of any N-terminal amino acid, including proline, that is linked to proline, even from a dipeptide or tripeptide.. Functionally, catalyzes the removal of a penultimate prolyl residue from the N-termini of peptides. This Ajellomyces capsulatus (strain NAm1 / WU24) (Darling's disease fungus) protein is Probable Xaa-Pro aminopeptidase HCAG_02413.